The following is a 304-amino-acid chain: Heme A synthase (304 aa).

Residues 1–8 (MFNKRNLK) lie on the Cytoplasmic side of the membrane. A helical transmembrane segment spans residues 9–29 (WLSVLATIIMAFVQLGGALVT). The Extracellular portion of the chain corresponds to 30 to 67 (KTGSEDGCGSSWPLCHGALLPQNLPIDTIIELSHRAVS). Cysteines 37 and 44 form a disulfide. Glu-60 is an active-site residue. His-63 serves as a coordination point for heme o. Residues 68 to 88 (GLSLIVVLWLAITAWKHIGYI) traverse the membrane as a helical segment. The Cytoplasmic segment spans residues 89–93 (REVKP). A helical transmembrane segment spans residues 94–114 (LAIISIAFLLVQALIGAAAVI). Over 115–123 (WQQNSYVLA) the chain is Extracellular. A helical transmembrane segment spans residues 124–144 (LHFGISLISFSSVFVLMLIIF). His-125 serves as a coordination point for heme o. Residues 145–163 (EVDKKYEADELYIRKPLRR) lie on the Cytoplasmic side of the membrane. The chain crosses the membrane as a helical span at residues 164-184 (LTWIMTGIVYLTIYTGALVRH). Residues 185 to 215 (AKASLAYGGWPLPFHDIIPHTEQDWVQFAHR) lie on the Extracellular side of the membrane. His-214 is a heme b binding site. The helical transmembrane segment at 216 to 236 (GMAFITFFWIMITFIHAVKNY) threads the bilayer. The Cytoplasmic segment spans residues 237–244 (SENRTIRY). The chain crosses the membrane as a helical span at residues 245–265 (GYTTAFILIILQVITGALSVM). Over 266 to 270 (TNVNL) the chain is Extracellular. A helical transmembrane segment spans residues 271-291 (FIALLHALFITILFGMIAYFI). Residue His-276 coordinates heme b. The Cytoplasmic segment spans residues 292-304 (MLMLRTIRSEKIK).

It belongs to the COX15/CtaA family. Type 1 subfamily. Interacts with CtaB. Heme b serves as cofactor.

It localises to the cell membrane. The enzyme catalyses Fe(II)-heme o + 2 A + H2O = Fe(II)-heme a + 2 AH2. It participates in porphyrin-containing compound metabolism; heme A biosynthesis; heme A from heme O: step 1/1. Its function is as follows. Catalyzes the conversion of heme O to heme A by two successive hydroxylations of the methyl group at C8. The first hydroxylation forms heme I, the second hydroxylation results in an unstable dihydroxymethyl group, which spontaneously dehydrates, resulting in the formyl group of heme A. In Staphylococcus haemolyticus (strain JCSC1435), this protein is Heme A synthase.